A 481-amino-acid polypeptide reads, in one-letter code: Guanine nucleotide exchange factor C9orf72 (481 aa).

Positions 23–194 constitute a uDENN C9ORF72-type domain; it reads SPLLAATFAY…ELLSSMKSHS (172 aa). The 144-residue stretch at 200–343 folds into the cDENN C9ORF72-type domain; it reads DIADTVLNDD…SELTAFWRAT (144 aa). Residues 370–464 enclose the dDENN C9ORF72-type domain; the sequence is VLHRDTLVKA…IKPGLHSFIF (95 aa). Residues 461-481 are required for the homodimerization of the C9orf72-SMCR8 complex; it reads SFIFGRPFYTSVQERDVLMTF.

As to quaternary structure, component of the C9orf72-SMCR8 complex, at least composed of C9orf72, SMCR8 and WDR41. The complex is formed of two protomers, each individually consisting of one molecule each of C9orf72, SMCR8 and WDR41. The protomers homodimerize via an interaction between C9orf72 (via C-terminus) and SMCR8 (via N-terminus). Within each protomer SMCR8 (via DENN domain) acts as a bridging protein between WDR41 (via C-terminus and N-terminus) and C9orf72 (via C-terminus). The C9orf72-SMCR8 complex associates with the ULK1/ATG1 kinase complex. Interacts with ULK1/ATG1 kinase complex members ULK1, ATG13 and RB1CC1. Interacts with SMCR8; the interaction is direct. Interacts with HNRNPA1, HNRNPA2B1 and UBQLN2. Interacts with small Rab GTPase RAB1A; the interaction mediates recruitment of RAB1A to the ULK1/ATG1 kinase complex. Also interacts with small Rab GTPase RAB7A. Interacts with cofilin. Interacts with GTP-binding proteins ARF1 and ARF6. Interacts with the DLG4/PSD-95. Interacts with CARM1 (via PH domain-like fold). Interacts with RAB39A and RAB39B (in GDP-bound forms); functions as GEF for RAB39A and RAB39B. In terms of tissue distribution, both isoforms are widely expressed, including kidney, lung, liver, heart, testis and several brain regions, such as cerebellum. Also expressed in the frontal cortex and in lymphoblasts (at protein level).

The protein localises to the cytoplasm. It localises to the nucleus. It is found in the P-body. Its subcellular location is the stress granule. The protein resides in the endosome. The protein localises to the lysosome. It localises to the cytoplasmic vesicle. It is found in the autophagosome. Its subcellular location is the autolysosome. The protein resides in the secreted. The protein localises to the cell projection. It localises to the axon. It is found in the growth cone. Its subcellular location is the perikaryon. The protein resides in the dendrite. The protein localises to the presynapse. It localises to the postsynapse. It is found in the nucleus membrane. In terms of biological role, acts as a guanine-nucleotide releasing factor (GEF) for Rab GTPases by promoting the conversion of inactive RAB-GDP to the active form RAB-GTP. Acts as a GEF for RAB39A which enables HOPS-mediated autophagosome-lysosome membrane tethering and fusion in mammalian autophagy. Component of the C9orf72-SMCR8 complex where both subunits display GEF activity and that regulates autophagy. As part of the C9orf72-SMCR8-WDR41 (CSW) complex, functions as GEF for RAB8A and RAB39B, thereby promoting autophagosome maturation. As part of the C9orf72-SMCR8 complex, also functions as GTPase activating protein (GAP) for RAB8A and RAB11A in vitro. The C9orf72-SMCR8 complex also acts as a regulator of autophagy initiation by interacting with the ULK1/ATG1 kinase complex and modulating its protein kinase activity. Promotes initiation of autophagy by regulating the RAB1A-dependent trafficking of the ULK1/ATG1 kinase complex to the phagophore which leads to autophagosome formation. Acts as a regulator of mTORC1 signaling by promoting phosphorylation of mTORC1 substrates. Plays a role in endosomal trafficking. May be involved in regulating the maturation of phagosomes to lysosomes. Promotes the lysosomal localization and lysosome-mediated degradation of CARM1 which leads to inhibition of starvation-induced lipid metabolism. Regulates actin dynamics in motor neurons by inhibiting the GTP-binding activity of ARF6, leading to ARF6 inactivation. This reduces the activity of the LIMK1 and LIMK2 kinases which are responsible for phosphorylation and inactivation of cofilin, leading to CFL1/cofilin activation. Positively regulates axon extension and axon growth cone size in spinal motor neurons. Required for SMCR8 protein expression and localization at pre- and post-synaptic compartments in the forebrain, also regulates protein abundance of RAB3A and GRIA1/GLUR1 in post-synaptic compartments in the forebrain and hippocampus. Plays a role within the hematopoietic system in restricting inflammation and the development of autoimmunity. Regulates stress granule assembly in response to cellular stress. Its function is as follows. Does not play a role in regulation of stress granule assembly in response to cellular stress. This Homo sapiens (Human) protein is Guanine nucleotide exchange factor C9orf72.